Consider the following 150-residue polypeptide: MGIQHEFDIIINGDIALRNLQLHRGDNYGCKLKIISNDYKKLKLRFIIRPDWSEIDEVKGLTVFANNYAVKVNKVDYTFYYVIYEAVIHLYNKKTEILIYSDDENELFKHYYPYISLNMISKKYKVKEENYSSPYIEHPLIPYRDYESMD.

It belongs to the orthopoxvirus OPG027 family.

Functionally, inhibits antiviral activity induced by type I interferons. Does not block signal transduction of IFN, but is important to counteract the host antiviral state induced by a pre-treatment with IFN. This Cynomys gunnisoni (Gunnison's prairie dog) protein is Interferon antagonist OPG027 (OPG027).